Here is a 727-residue protein sequence, read N- to C-terminus: Engulfment and cell motility protein 1 (727 aa).

Tyr18 carries the post-translational modification Phosphotyrosine; by HCK. N6-acetyllysine is present on residues Lys100 and Lys105. A Phosphotyrosine; by HCK modification is found at Tyr216. An ELMO domain is found at 319–492; it reads AQRDIIFELR…VVKEQVMRAL (174 aa). Ser344 is subject to Phosphoserine. 2 positions are modified to phosphotyrosine; by HCK: Tyr395 and Tyr511. The 122-residue stretch at 555–676 folds into the PH domain; that stretch reads RLVEGTCFRK…DGLNALLGKD (122 aa). The short motif at 707-714 is the SH3-binding element; sequence PDAPPPIP. The residue at position 720 (Tyr720) is a Phosphotyrosine; by HCK.

In terms of assembly, interacts directly with the SH3-domain of DOCK1 via its SH3-binding site. Probably forms a heterotrimeric complex with DOCK1 and RAC1. Interacts with PLEKHG6. Interacts with HCK (via SH3 domain). Interacts with ADGRB1. Interacts with ADGRB3. Interacts with DOCK5. In terms of processing, phosphorylated by HCK.

It is found in the cytoplasm. The protein localises to the cell membrane. Involved in cytoskeletal rearrangements required for phagocytosis of apoptotic cells and cell motility. Acts in association with DOCK1 and CRK. Was initially proposed to be required in complex with DOCK1 to activate Rac Rho small GTPases. May enhance the guanine nucleotide exchange factor (GEF) activity of DOCK1. The protein is Engulfment and cell motility protein 1 (Elmo1) of Mus musculus (Mouse).